The chain runs to 657 residues: Single-minded homolog 2 (657 aa).

The bHLH domain occupies methionine 1–arginine 53. 2 consecutive PAS domains span residues alanine 77–histidine 147 and proline 218–glycine 288. A PAC domain is found at proline 218–glycine 288. The Single-minded C-terminal domain occupies glutamate 336–arginine 657. Positions glutamate 354–glutamine 364 are enriched in polar residues. Disordered regions lie at residues glutamate 354–proline 387 and leucine 612–alanine 641. The Nuclear localization signal motif lies at arginine 367–tyrosine 386. Residues serine 369–leucine 381 are compositionally biased toward basic residues.

In terms of assembly, efficient DNA binding requires dimerization with another bHLH protein. Heterodimer of SIM2 and ARNT. In terms of tissue distribution, transcripts were detected in high levels in kidney followed by skeletal muscle and lung. Low levels were found in testis, brain and heart. In early fetal development it is found in CNS, developing kidney, tongue epithelium and cartilage primordia.

It localises to the nucleus. Functionally, transcription factor that may be a master gene of CNS development in cooperation with Arnt. It may have pleiotropic effects in the tissues expressed during development. The protein is Single-minded homolog 2 (Sim2) of Mus musculus (Mouse).